We begin with the raw amino-acid sequence, 417 residues long: Zinc finger CCCH domain-containing protein ZFN-like (417 aa).

C3H1-type zinc fingers lie at residues 31-58 (PGEP…HPPN) and 75-103 (RLGQ…HPKD). The segment at 121 to 149 (RPNESERAYYLRTGQCKFGNTCKFHHPQP) adopts a C3H1-type 3; degenerate zinc-finger fold. C3H1-type zinc fingers lie at residues 278-306 (RPDQ…HPRE) and 324-352 (RPGE…HPMG). A disordered region spans residues 383 to 417 (SSEGLVESGTAKPRRLSLSETRPIPPGDDNIDDEG).

The protein resides in the nucleus. The polypeptide is Zinc finger CCCH domain-containing protein ZFN-like (Pisum sativum (Garden pea)).